The primary structure comprises 257 residues: Protein YIPF5 (257 aa).

Residues 1–124 (MSGFENLNTD…KVADGSIMNE (124 aa)) lie on the Cytoplasmic side of the membrane. The segment at 75–106 (PASPQPFYGNSFEDEPPLLEELGINFDHIWQK) is interaction with Sec23. The chain crosses the membrane as a helical span at residues 125-145 (TDLAGPMVFCLAFGATLLLAG). A topological domain (lumenal) is located at residue Lys-146. Residues 147–167 (IQFGYVYGISAIGCLGMFCLL) traverse the membrane as a helical segment. The Cytoplasmic portion of the chain corresponds to 168 to 173 (NLMSMT). A helical membrane pass occupies residues 174–194 (GVSFGCVASVLGYCLLPMILL). Topologically, residues 195–196 (SS) are lumenal. The helical transmembrane segment at 197-217 (FAVIFSLQGMVGIILTAGIIG) threads the bilayer. Over 218-236 (WCSFSASKIFISALAMEGQ) the chain is Cytoplasmic. The chain crosses the membrane as a helical span at residues 237–257 (QLLVAYPCALLYGVFALISVF).

This sequence belongs to the YIP1 family. As to quaternary structure, interacts with the COPII coat components Sec23 (SEC23A and/or SEC23B) and Sec24 (SEC24A and/or SEC24B). Interacts with YIF1A. May interact with RAB1A. Interacts with YIPF3 and YIPF4.

It localises to the endoplasmic reticulum membrane. It is found in the golgi apparatus. Its subcellular location is the cis-Golgi network membrane. The protein resides in the cytoplasmic vesicle. The protein localises to the COPII-coated vesicle. Plays a role in transport between endoplasmic reticulum and Golgi. In pancreatic beta cells, required to transport proinsulin from endoplasmic reticulum into the Golgi. In Macaca fascicularis (Crab-eating macaque), this protein is Protein YIPF5 (YIPF5).